The following is a 1058-amino-acid chain: Carbamoyl phosphate synthase large chain (1058 aa).

The interval 1 to 399 (MPIDKDIKKV…AIQKAIRSLD (399 aa)) is carboxyphosphate synthetic domain. Arg127, Arg167, Gly173, Gly174, Glu206, Val208, Glu213, Gly239, Ile240, His241, Gln282, and Glu296 together coordinate ATP. One can recognise an ATP-grasp 1 domain in the interval 131-325 (GHFMDKLNEP…IAKISSKIAL (195 aa)). 3 residues coordinate Mg(2+): Gln282, Glu296, and Asn298. Mn(2+) contacts are provided by Gln282, Glu296, and Asn298. Residues 400–538 (MGHDGFEYVE…YSTYDSGNEL (139 aa)) are oligomerization domain. The interval 539-924 (KSSNKKKIVI…YKSQLAAGMD (386 aa)) is carbamoyl phosphate synthetic domain. An ATP-grasp 2 domain is found at 663–856 (AKLLNKLHIH…LAKVATWIMT (194 aa)). Residues Arg699, Lys738, Leu740, Glu745, Gly770, Val771, His772, Ser773, Gln813, and Glu827 each contribute to the ATP site. Gln813, Glu827, and Asn829 together coordinate Mg(2+). Residues Gln813, Glu827, and Asn829 each contribute to the Mn(2+) site. The region spanning 923 to 1058 (MDLPKEGKIF…KSLNEHIDGE (136 aa)) is the MGS-like domain. An allosteric domain region spans residues 925–1058 (LPKEGKIFIS…KSLNEHIDGE (134 aa)).

The protein belongs to the CarB family. In terms of assembly, composed of two chains; the small (or glutamine) chain promotes the hydrolysis of glutamine to ammonia, which is used by the large (or ammonia) chain to synthesize carbamoyl phosphate. Tetramer of heterodimers (alpha,beta)4. The cofactor is Mg(2+). It depends on Mn(2+) as a cofactor.

It carries out the reaction hydrogencarbonate + L-glutamine + 2 ATP + H2O = carbamoyl phosphate + L-glutamate + 2 ADP + phosphate + 2 H(+). It catalyses the reaction hydrogencarbonate + NH4(+) + 2 ATP = carbamoyl phosphate + 2 ADP + phosphate + 2 H(+). Its pathway is amino-acid biosynthesis; L-arginine biosynthesis; carbamoyl phosphate from bicarbonate: step 1/1. It functions in the pathway pyrimidine metabolism; UMP biosynthesis via de novo pathway; (S)-dihydroorotate from bicarbonate: step 1/3. Its function is as follows. Large subunit of the glutamine-dependent carbamoyl phosphate synthetase (CPSase). CPSase catalyzes the formation of carbamoyl phosphate from the ammonia moiety of glutamine, carbonate, and phosphate donated by ATP, constituting the first step of 2 biosynthetic pathways, one leading to arginine and/or urea and the other to pyrimidine nucleotides. The large subunit (synthetase) binds the substrates ammonia (free or transferred from glutamine from the small subunit), hydrogencarbonate and ATP and carries out an ATP-coupled ligase reaction, activating hydrogencarbonate by forming carboxy phosphate which reacts with ammonia to form carbamoyl phosphate. The polypeptide is Carbamoyl phosphate synthase large chain (Methanobrevibacter smithii (strain ATCC 35061 / DSM 861 / OCM 144 / PS)).